Reading from the N-terminus, the 82-residue chain is Small ribosomal subunit protein bS16 (82 aa).

It belongs to the bacterial ribosomal protein bS16 family.

The polypeptide is Small ribosomal subunit protein bS16 (Natranaerobius thermophilus (strain ATCC BAA-1301 / DSM 18059 / JW/NM-WN-LF)).